The sequence spans 278 residues: GTPase Era (278 aa).

The Era-type G domain occupies 7 to 168; sequence YCGYIAIVGK…ENLIYPYLPN (162 aa). Residues 15–22 form a G1 region; it reads GKPNVGKS. Position 15 to 22 (15 to 22) interacts with GTP; sequence GKPNVGKS. The G2 stretch occupies residues 41-45; it reads NTTQK. The interval 62-65 is G3; it reads DTPG. GTP contacts are provided by residues 62–66 and 117–120; these read DTPGI and NKID. Positions 117 to 120 are G4; it reads NKID. Positions 147-149 are G5; that stretch reads ISA. The KH type-2 domain maps to 199–276; that stretch reads LRDELPSIIT…YLIIWVKVKI (78 aa).

It belongs to the TRAFAC class TrmE-Era-EngA-EngB-Septin-like GTPase superfamily. Era GTPase family. Monomer.

The protein resides in the cytoplasm. The protein localises to the cell membrane. In terms of biological role, an essential GTPase that binds both GDP and GTP, with rapid nucleotide exchange. Plays a role in 16S rRNA processing and 30S ribosomal subunit biogenesis and possibly also in cell cycle regulation and energy metabolism. The chain is GTPase Era from Buchnera aphidicola subsp. Schizaphis graminum (strain Sg).